The following is a 633-amino-acid chain: Chitin synthase regulatory factor 4 (633 aa).

Residues 121 to 151 (ATSSQETKRDRPLPNIRNSAPSATRSHSTPC) are disordered. The segment covering 136-149 (IRNSAPSATRSHST) has biased composition (polar residues). Serine 148 carries the post-translational modification Phosphoserine. Sel1-like repeat units follow at residues 278–314 (AKAM…NLGY), 315–346 (TRSL…SEND), 438–474 (SSAQ…KRGE), 475–511 (TEAD…MAGN), and 512–543 (ANAQ…KAGH). The interval 583 to 613 (ASETSPPHAPAVSSTPVTSAPPVSQTKVTKV) is disordered. A compositionally biased stretch (low complexity) spans 592-613 (PAVSSTPVTSAPPVSQTKVTKV).

Its subcellular location is the cytoplasm. In terms of biological role, involved in septum formation. Required for the proper localization of chs2 at the septum. The protein is Chitin synthase regulatory factor 4 (chr4) of Schizosaccharomyces pombe (strain 972 / ATCC 24843) (Fission yeast).